Consider the following 22-residue polypeptide: Probable ATP-dependent Clp protease proteolytic subunit (22 aa).

It belongs to the peptidase S14 family. Component of the chloroplastic Clp protease core complex.

It catalyses the reaction Hydrolysis of proteins to small peptides in the presence of ATP and magnesium. alpha-casein is the usual test substrate. In the absence of ATP, only oligopeptides shorter than five residues are hydrolyzed (such as succinyl-Leu-Tyr-|-NHMec, and Leu-Tyr-Leu-|-Tyr-Trp, in which cleavage of the -Tyr-|-Leu- and -Tyr-|-Trp bonds also occurs).. In terms of biological role, cleaves peptides in various proteins in a process that requires ATP hydrolysis. Has a chymotrypsin-like activity. Plays a major role in the degradation of misfolded proteins. The polypeptide is Probable ATP-dependent Clp protease proteolytic subunit (Populus euphratica (Euphrates poplar)).